The following is a 446-amino-acid chain: Trigger factor (446 aa).

Positions 163–248 constitute a PPIase FKBP-type domain; sequence GDRLVIDFEG…VKEIKKKNLL (86 aa).

The protein belongs to the FKBP-type PPIase family. Tig subfamily.

The protein localises to the cytoplasm. The catalysed reaction is [protein]-peptidylproline (omega=180) = [protein]-peptidylproline (omega=0). Involved in protein export. Acts as a chaperone by maintaining the newly synthesized protein in an open conformation. Functions as a peptidyl-prolyl cis-trans isomerase. This Natranaerobius thermophilus (strain ATCC BAA-1301 / DSM 18059 / JW/NM-WN-LF) protein is Trigger factor.